Consider the following 251-residue polypeptide: Hydroxyacylglutathione hydrolase (251 aa).

Residues His53, His55, Asp57, His58, His110, Asp127, and His165 each coordinate Zn(2+).

This sequence belongs to the metallo-beta-lactamase superfamily. Glyoxalase II family. Monomer. Zn(2+) is required as a cofactor.

It catalyses the reaction an S-(2-hydroxyacyl)glutathione + H2O = a 2-hydroxy carboxylate + glutathione + H(+). It participates in secondary metabolite metabolism; methylglyoxal degradation; (R)-lactate from methylglyoxal: step 2/2. Functionally, thiolesterase that catalyzes the hydrolysis of S-D-lactoyl-glutathione to form glutathione and D-lactic acid. The chain is Hydroxyacylglutathione hydrolase from Edwardsiella ictaluri (strain 93-146).